A 179-amino-acid polypeptide reads, in one-letter code: D-glycero-beta-D-manno-heptose-1,7-bisphosphate 7-phosphatase (179 aa).

Asp-7 functions as the Nucleophile in the catalytic mechanism. Residues Asp-7 and Asp-9 each contribute to the Mg(2+) site. Position 7 (Asp-7) interacts with substrate. Asp-9 (proton donor) is an active-site residue. Residues 15–19, 50–53, and Arg-57 each bind substrate; these read DSDAF and TNQS. Cys-89, His-91, Cys-97, and Cys-99 together coordinate Zn(2+). Arg-100 serves as a coordination point for substrate. A Mg(2+)-binding site is contributed by Asp-126. Arg-129 lines the substrate pocket.

As to quaternary structure, monomer. Mg(2+) is required as a cofactor. Requires Zn(2+) as cofactor.

The protein resides in the cytoplasm. The enzyme catalyses D-glycero-beta-D-manno-heptose 1,7-bisphosphate + H2O = D-glycero-beta-D-manno-heptose 1-phosphate + phosphate. It participates in nucleotide-sugar biosynthesis; ADP-L-glycero-beta-D-manno-heptose biosynthesis; ADP-L-glycero-beta-D-manno-heptose from D-glycero-beta-D-manno-heptose 7-phosphate: step 2/4. It functions in the pathway bacterial outer membrane biogenesis; LPS core biosynthesis. Converts the D-glycero-beta-D-manno-heptose 1,7-bisphosphate (beta-HBP) intermediate into D-glycero-beta-D-manno-heptose 1-phosphate by removing the phosphate group at the C-7 position. This chain is D-glycero-beta-D-manno-heptose-1,7-bisphosphate 7-phosphatase, found in Bordetella bronchiseptica (strain ATCC BAA-588 / NCTC 13252 / RB50) (Alcaligenes bronchisepticus).